We begin with the raw amino-acid sequence, 211 residues long: Superoxide dismutase [Fe] (211 aa).

Histidine 34, histidine 85, aspartate 171, and histidine 175 together coordinate Fe cation.

This sequence belongs to the iron/manganese superoxide dismutase family. In terms of assembly, homotetramer at high temperature; homodimer at room temperature. The cofactor is Fe cation.

It is found in the cytoplasm. The catalysed reaction is 2 superoxide + 2 H(+) = H2O2 + O2. Destroys superoxide anion radicals which are normally produced within the cells and which are toxic to biological systems. In Sulfolobus acidocaldarius (strain ATCC 33909 / DSM 639 / JCM 8929 / NBRC 15157 / NCIMB 11770), this protein is Superoxide dismutase [Fe] (sod).